Here is a 956-residue protein sequence, read N- to C-terminus: MSSERRPELEETAVDPATGSAASRKFSIVQDAVETTIVAPTNHGPSPRFSTLVRNLFEPLVNLSAVVAALRKKPTEAKAHIASQFIKGWVEEVGKDIYPAFRLILPDKDRERAVYGLKEKALGRLWVKVLNLAKDSPDAKALSEWKQGGNESAGNFSKRCYEVLSKRTSLTDYGHMTVDEVNERLDLLADGETDQAKQIEILTYFYKHMNATELKWLVNIILRQMKMNATEKVFFEPWHPDAESLFNVTASLKRVCWELTDPTKRLTSAEAQVSLFACFMPQIAAFPKYSGQDIAGKHFKGRPFYIEEKIDGERMQMHMSEYGNKFHWWSRRSKDFTETYGNSLDDASGSLTKRLRGIINPKVRNCVLDGEMVAYDPATKKIIPFGTLRTANRNEQNDLNLTKPMFMVFDILLLNDKPLVDYTLAERKRTLRTIFARTDNETVGQEGVLEVLPYTEATTAAEIETCMRKIIAESSEGLVIKDPTSVYRVNTRDDSWLKMKPEYMSEFGEKLDVVIIGGYYGSGKRGSILSSYLCGLRADGSDQFWSFFKVGGGLTAGDYQAIRTKTEGKWKRWDKNDKPKNVLLAGPNGDLERPDVWIEPSDSVVVEVKAASVVASDQYKVGLCLRFPRFRALRLDKTWEDGLTISQFAELRQTVEMEAENKELELEDRKRRNAGPGRGAKRLKLANVSSDEDELGTDERPTSVFKATSFAVLSDMSSPRYMSKAAVENLIKKHGGTVFQTVEGPHTIPVADTRTIKVQALTKRVHGVDVIRPNWLLDCINEEKLVALEPRNLLESSAETLALAKTNVDEFGDSYTRPLTYKEMQEVLRFMDQFDLDQTNPPDLMMEVLETNDGAVPKGMLFYGKKVYMSTSNMDTVALETQFRAYDALRCLQFGGANLVTDMKDLVVAVAKTEEEAKELRRVSSEQVFPFRVVSIKWVEESWKNGTVEIEDDYPL.

ATP contacts are provided by glutamate 307, lysine 309, isoleucine 310, arginine 314, glutamate 371, phenylalanine 409, glutamate 476, lysine 481, lysine 498, and lysine 500. Lysine 309 (N6-AMP-lysine intermediate) is an active-site residue. Glutamate 371 contributes to the Mg(2+) binding site. Glutamate 476 serves as a coordination point for Mg(2+). The interval 666–700 (LEDRKRRNAGPGRGAKRLKLANVSSDEDELGTDER) is disordered. BRCT domains are found at residues 700–793 (RPTS…PRNL) and 857–956 (PKGM…DYPL).

The protein belongs to the ATP-dependent DNA ligase family. Mg(2+) serves as cofactor.

Its subcellular location is the nucleus. It catalyses the reaction ATP + (deoxyribonucleotide)n-3'-hydroxyl + 5'-phospho-(deoxyribonucleotide)m = (deoxyribonucleotide)n+m + AMP + diphosphate.. In terms of biological role, DNA ligase involved in DNA non-homologous end joining (NHEJ); required for double-strand break (DSB) repair. This is DNA ligase 4 (LIG4) from Yarrowia lipolytica (strain CLIB 122 / E 150) (Yeast).